Consider the following 179-residue polypeptide: MAEEVNSPNEAVNLQEETAIAPVGPVSTWLTTNGFEHQSLTADHLGVEMVQVEADLLLPLCTALYAYGFNYLQCQGAYDEGPGKSLVSFYHLVKLTEDTRNPEEVRLKVFLPRENPVVPSVYWIWKAADWQERECYDMFGIVYEGHPNLKRILMPEDWVGWPLRKDYISPDFYELQDAY.

It belongs to the complex I 30 kDa subunit family. As to quaternary structure, NDH-1 can be composed of about 15 different subunits; different subcomplexes with different compositions have been identified which probably have different functions. In terms of processing, in at one experiment the initiator methionine has been seen to be kept and removed.

Its subcellular location is the cellular thylakoid membrane. It carries out the reaction a plastoquinone + NADH + (n+1) H(+)(in) = a plastoquinol + NAD(+) + n H(+)(out). The catalysed reaction is a plastoquinone + NADPH + (n+1) H(+)(in) = a plastoquinol + NADP(+) + n H(+)(out). NDH-1 shuttles electrons from an unknown electron donor, via FMN and iron-sulfur (Fe-S) centers, to quinones in the respiratory and/or the photosynthetic chain. The immediate electron acceptor for the enzyme in this species is believed to be plastoquinone. Couples the redox reaction to proton translocation, and thus conserves the redox energy in a proton gradient. Cyanobacterial NDH-1 also plays a role in inorganic carbon-concentration. The chain is NAD(P)H-quinone oxidoreductase subunit J from Synechocystis sp. (strain ATCC 27184 / PCC 6803 / Kazusa).